Reading from the N-terminus, the 303-residue chain is MYIQILGSAAGGGFPQWNCNCVNCKGYRDGTLRASARTQSSIALSDDGEHWILCNASPDIRAQLQAFAPMQPARALRDTGINAIVLLDSQIDHTTGLLSLREGCPHQVWCTDMVHQDLTTGFPLFNMLSHWNGGLVWNRIELEGSFVIEACPNLRFTPFPLRSAAPPYSPHRFDPHPGDNLGLLVEDTRTGGKLFYAPGLGQVDDKLLQMMGGADCLLVDGTLWEDDEMQRRGVGTRTGREMGHLAQNGPGGMLEVLDGFPRQRKVLIHINNTNPILDEDSPERAEVVRRGVEVAFDGMSLKL.

It belongs to the PqqB family.

Its pathway is cofactor biosynthesis; pyrroloquinoline quinone biosynthesis. Functionally, may be involved in the transport of PQQ or its precursor to the periplasm. The protein is Coenzyme PQQ synthesis protein B of Pseudomonas entomophila (strain L48).